Consider the following 126-residue polypeptide: Aspartate 1-decarboxylase (126 aa).

S25 functions as the Schiff-base intermediate with substrate; via pyruvic acid in the catalytic mechanism. Position 25 is a pyruvic acid (Ser) (S25). Position 57 (T57) interacts with substrate. Y58 serves as the catalytic Proton donor. Residue 73-75 (GAA) participates in substrate binding.

Belongs to the PanD family. As to quaternary structure, heterooctamer of four alpha and four beta subunits. The cofactor is pyruvate. Is synthesized initially as an inactive proenzyme, which is activated by self-cleavage at a specific serine bond to produce a beta-subunit with a hydroxyl group at its C-terminus and an alpha-subunit with a pyruvoyl group at its N-terminus.

It is found in the cytoplasm. The catalysed reaction is L-aspartate + H(+) = beta-alanine + CO2. Its pathway is cofactor biosynthesis; (R)-pantothenate biosynthesis; beta-alanine from L-aspartate: step 1/1. Its function is as follows. Catalyzes the pyruvoyl-dependent decarboxylation of aspartate to produce beta-alanine. The polypeptide is Aspartate 1-decarboxylase (Halorhodospira halophila (strain DSM 244 / SL1) (Ectothiorhodospira halophila (strain DSM 244 / SL1))).